The primary structure comprises 2152 residues: MSDTPSTGFSIIHPTSSEDQVPPPRHLSLTHPVVAKRISFYKSGDPQFGGVRVVVNPRSFKSFDALLDNLSRKVPLPFGVRNISTPRGRHSITRLEELEDGESYLCSHGRKVQPVDLDKARRRPRPWLSSRAISAQAPPHPVAVAAPGKPRAPRSLVVFRNGDPKTRRTVLLSRRVTQSFEAFLQHLTEVMQRPVVKLYATDGRRVPSLQAVILSSGAVVAAGREPFKPGNYDIQKYLLPARLPGISQRVYPKGNAKSESRKISTHMSSSSRSQIYSVSSEKTHNNDCYLDYSFVPENYLALEKSDSQNLPIYPSEDDIEKSIIFNQDGTMTVEMKVRFRIKEEETIKWTTTVSKTGPSNNDEKSEMSFPGRTESRSSGLKLAACSFSADVSPMERSSDQEGSLPEEINIQTTDEEAETCSSASWENATVDTDITQGTQDQAKHRFYRPPTPGLRRVRQKKSVIGSVTLVSETEVQEKMIGQFSYSEERESGENKSEYHMFAHSCSKMSAVSNKPVLVQINNNDQMEESLLERKKENRLLKSSAISAGVIEITSQKMLEMSHNNGLPSTISNNSIVEEGVVDSMVSDNKTGIKNFRAYDNTNDRFSPISADATHFSSTNSGTDKNISEATASETSSTVTARIDRLINEFAQCGLTKLPKNEKKILSSVASKKKKKSLQQAINSRYQDGQLATKGILNKNERINTRGRIRKEMILQDSDSRLKGGILCEEDLQTSDTVIESNTFCSKSNLNSMISKNFHRNKLNTTQNSKVQGLLTKRKSKSLKKVSLGAPKKREICQGDKVFPHNESKYCKSTFENKSLFHVFNILEQKPKYFYAPQSQAEVASGYLRGMAKKSLVTDSHITLRSQKKQKGDKLKASAVVSKQHATTRANSLASLKKPDFPEDIAHHSVQNYIQSWLQNINPYPTLKPIKSAPVCRNEMSVVNCNNNSFPGNDPHKSSGKINNFVMESNKHITKIASLTGDNLCKEGDKSFIASDTGEEDLHETQVGSLNDAYLVSLHEHCTLSQSAINDRNTKRHIAAEKSGPEKKLVYQEINLARKRQSVEAAIQVDPIEEETPKDLLPVLMLHQLQASVPGISKTQNGVVQMPGSLANVPFHSAICNSSTNLLLAWLLVLNLKGSMNSFCQVDAHKTINKSSETLALLEILKHIAITEEADDLKAAVANLVESTTSHFGLSEKEQDVVPLDLSANCSTVSIQSVPKCSENERTQRISSLDGDCSASEACAPEVCVLEVTCSPCETWTVNKTYPPKETCNPSDTHFPSDGYGVDQTSMNKACFLGEVCSLTDTVFSNKACAQKENHIYEGACPTVETYVPVSVCNTIDFFNSKENTYTDNLESTEELERGDDIQKDLNILTDPEYKNGFNTLVSHQNVSNLSSCRLCLSEKEAELDKKHSSLDDFKNCSLKKFQDENAYTSFDMEEPRTSEEPGSITNSMTSSERNISELESFEELENPDTDIFNTVVNGGEQATEELIQEELEASKTLELIDISGKNVMEEKRRNGIIYEIISKRLATPPSLVFCYDSKQNREKETNEGETKMVKMMVKSMEAGSYSESSPDLKKCIKSPVTSDWSDYRPDSDSEQPYKTSSDDPNDSGELAQEKEYNIGFVKRAIEKLYGKADIIKPSFFPGSTRKSQVCPYNSVEFQCSRKASLYDSEGQSFGSSEQVSTSSPMLQEFQEERQDKCDVNGVRNDYYGGDIVEPGTKQNDHSRILTDIEEGVLIDKGKWLLKENHLLRMSSENPGMCGNADTTSVDTLLDNNSSEVPYSHFGNLAPVPVMDELSSSELEELTQPLELKCNYFNMPHGSDSEPFHEDVHNETCAKERIANHHTEERGNNHQSERVCTSVTHSFTSASNKVYPVSDDAIKNQPLPGSNMIHGTLQEADSLDKLYALCGQHCPILTVIIQPVNEEDRGFAYRKESDIENFLGFYLWMKIHPYLLQTDKKVFREENNKASMRQNHIDNAIGDIFDQFYFNNTFDLMGKRRKQKRINFLELEEEGNLKKFQPDLKERLCMNFLHTSLLVVSNMNSDTQDLSSQTNEMFKAVDENNNLLNTGFQGSRTNLNQIVRENTNCHYFFEMLGQACLLDICQVETSLNISNRNTLEELCMFEGENLFIWEEEDILNLTDLESSREQEDL.

Residues 1–19 (MSDTPSTGFSIIHPTSSED) show a composition bias toward polar residues. Residues 1–25 (MSDTPSTGFSIIHPTSSEDQVPPPR) form a disordered region. 2 Doublecortin domains span residues 36 to 118 (KRIS…VDLD) and 154 to 233 (RSLV…GNYD). 3 disordered regions span residues 353–375 (VSKT…RTES), 1435–1455 (DMEE…MTSS), and 1587–1616 (DWSD…ELAQ).

As to quaternary structure, interacts (via the doublecortin domains) with microtubules. Interacts with RP1L1. Interacts with MAK.

It is found in the cytoplasm. The protein resides in the cytoskeleton. The protein localises to the cilium axoneme. It localises to the cell projection. Its subcellular location is the cilium. It is found in the photoreceptor outer segment. Microtubule-associated protein regulating the stability and length of the microtubule-based axoneme of photoreceptors. Required for the differentiation of photoreceptor cells, it plays a role in the organization of the outer segment of rod and cone photoreceptors ensuring the correct orientation and higher-order stacking of outer segment disks along the photoreceptor axoneme. This is Oxygen-regulated protein 1 (RP1) from Papio hamadryas (Hamadryas baboon).